The following is a 1328-amino-acid chain: ABC transporter C family member 7 (1328 aa).

An ABC transmembrane type-1 1 domain is found at 104 to 389 (HKTSIIVQIF…LPQAIQRLLS (286 aa)). Helical transmembrane passes span 112–132 (IFSAIVSVLSPLCLRAFILYV), 140–160 (SFLVGLFYAVLVLMGALFLSI), 224–244 (LILLVAPIQIIALLALLCWTI), 245–265 (GYSGLVGFLIMILSLPLSTFL), 287–307 (ISEMINGIYLLKLYNWELFFI), and 333–353 (MVVQISSALVLVSSFTVYTLI). The region spanning 457 to 678 (IELVNNDSIE…FDFESIMKTK (222 aa)) is the ABC transporter 1 domain. 490–497 (GVVGSGKS) lines the ATP pocket. The span at 684–695 (LNNSNNNNNNNN) shows a compositional bias: low complexity. The interval 684 to 708 (LNNSNNNNNNNNNKEEEEDVENLEK) is disordered. 5 helical membrane-spanning segments follow: residues 762 to 782 (FIFFFTMIMMYIISQLLFLLF), 802 to 822 (DSFYILYYLLLVGLFSVFLGI), 894 to 914 (VLMMIVINPLIVFPFLLLALF), 988 to 1008 (IGIKIEIISSAAVFLSAFFSL), and 1014 to 1034 (GLSVLAVTTSLSLTGYLNWCI). An ABC transmembrane type-1 2 domain is found at 765–1046 (FFTMIMMYII…YIEFSMKMSS (282 aa)). An ABC transporter 2 domain is found at 1083-1316 (IQFKNVEIKY…INNQNSKFKK (234 aa)). 1117 to 1124 (GKSGSGKS) contributes to the ATP binding site.

The protein belongs to the ABC transporter superfamily. ABCC family. Conjugate transporter (TC 3.A.1.208) subfamily.

It localises to the membrane. The polypeptide is ABC transporter C family member 7 (abcC7) (Dictyostelium discoideum (Social amoeba)).